The sequence spans 189 residues: Elongation factor P (189 aa).

Belongs to the elongation factor P family.

It is found in the cytoplasm. It participates in protein biosynthesis; polypeptide chain elongation. Functionally, involved in peptide bond synthesis. Stimulates efficient translation and peptide-bond synthesis on native or reconstituted 70S ribosomes in vitro. Probably functions indirectly by altering the affinity of the ribosome for aminoacyl-tRNA, thus increasing their reactivity as acceptors for peptidyl transferase. This Rhizobium meliloti (strain 1021) (Ensifer meliloti) protein is Elongation factor P.